We begin with the raw amino-acid sequence, 366 residues long: Anhydro-N-acetylmuramic acid kinase (366 aa).

10–17 (GTSLDGVD) lines the ATP pocket.

The protein belongs to the anhydro-N-acetylmuramic acid kinase family.

It carries out the reaction 1,6-anhydro-N-acetyl-beta-muramate + ATP + H2O = N-acetyl-D-muramate 6-phosphate + ADP + H(+). It participates in amino-sugar metabolism; 1,6-anhydro-N-acetylmuramate degradation. Its pathway is cell wall biogenesis; peptidoglycan recycling. Functionally, catalyzes the specific phosphorylation of 1,6-anhydro-N-acetylmuramic acid (anhMurNAc) with the simultaneous cleavage of the 1,6-anhydro ring, generating MurNAc-6-P. Is required for the utilization of anhMurNAc either imported from the medium or derived from its own cell wall murein, and thus plays a role in cell wall recycling. The polypeptide is Anhydro-N-acetylmuramic acid kinase (Nitrobacter winogradskyi (strain ATCC 25391 / DSM 10237 / CIP 104748 / NCIMB 11846 / Nb-255)).